An 857-amino-acid chain; its full sequence is Protein translocase subunit SecA (857 aa).

ATP-binding positions include glutamine 88, 106 to 110 (GEGKT), and aspartate 496. Zn(2+)-binding residues include cysteine 833, cysteine 835, cysteine 844, and cysteine 845.

The protein belongs to the SecA family. As to quaternary structure, monomer and homodimer. Part of the essential Sec protein translocation apparatus which comprises SecA, SecYEG and auxiliary proteins SecDF-YajC and YidC. Zn(2+) serves as cofactor.

The protein localises to the cell inner membrane. The protein resides in the cytoplasm. The catalysed reaction is ATP + H2O + cellular proteinSide 1 = ADP + phosphate + cellular proteinSide 2.. Its function is as follows. Part of the Sec protein translocase complex. Interacts with the SecYEG preprotein conducting channel. Has a central role in coupling the hydrolysis of ATP to the transfer of proteins into and across the cell membrane, serving as an ATP-driven molecular motor driving the stepwise translocation of polypeptide chains across the membrane. The polypeptide is Protein translocase subunit SecA (Sulfurimonas denitrificans (strain ATCC 33889 / DSM 1251) (Thiomicrospira denitrificans (strain ATCC 33889 / DSM 1251))).